The following is a 380-amino-acid chain: 1-deoxy-D-xylulose 5-phosphate reductoisomerase (380 aa).

NADPH-binding residues include Ser-10, Gly-11, Ser-12, Ile-13, Gly-36, Lys-37, Asn-38, and Asn-120. Lys-121 contributes to the 1-deoxy-D-xylulose 5-phosphate binding site. Glu-122 contributes to the NADPH binding site. A Mn(2+)-binding site is contributed by Asp-146. 4 residues coordinate 1-deoxy-D-xylulose 5-phosphate: Ser-147, Glu-148, Ser-172, and His-195. Glu-148 contributes to the Mn(2+) binding site. Residue Gly-201 participates in NADPH binding. Residues Ser-208, Asn-213, Lys-214, and Glu-217 each coordinate 1-deoxy-D-xylulose 5-phosphate. Glu-217 provides a ligand contact to Mn(2+).

This sequence belongs to the DXR family. It depends on Mg(2+) as a cofactor. Mn(2+) is required as a cofactor.

The catalysed reaction is 2-C-methyl-D-erythritol 4-phosphate + NADP(+) = 1-deoxy-D-xylulose 5-phosphate + NADPH + H(+). It functions in the pathway isoprenoid biosynthesis; isopentenyl diphosphate biosynthesis via DXP pathway; isopentenyl diphosphate from 1-deoxy-D-xylulose 5-phosphate: step 1/6. Functionally, catalyzes the NADPH-dependent rearrangement and reduction of 1-deoxy-D-xylulose-5-phosphate (DXP) to 2-C-methyl-D-erythritol 4-phosphate (MEP). The polypeptide is 1-deoxy-D-xylulose 5-phosphate reductoisomerase (Bacillus cereus (strain ATCC 10987 / NRS 248)).